We begin with the raw amino-acid sequence, 159 residues long: uncharacterized protein (159 aa).

Transmembrane regions (helical) follow at residues 16–36, 84–104, and 112–132; these read IVLP…AFIF, VYAG…LLII, and VFFY…LLPV.

Its subcellular location is the cell membrane. This is an uncharacterized protein from Bacillus subtilis (strain 168).